A 138-amino-acid chain; its full sequence is QHSKHHAAYVAGVNSAVAKLEEAREKGDHAAIFLNEKNLAFHLGGHVNHSIWWKNLSPNGGDKPTGDLAAAIDDQFGSFDKFQAQFTAAANGLQGSGWAVLGYDSLGQKLLTFQLYDQQANVPLGIIPLLQVDMWEHA.

Mn(2+)-binding residues include Gln1, His49, Asp133, and His137.

This sequence belongs to the iron/manganese superoxide dismutase family. Mn(2+) serves as cofactor.

It carries out the reaction 2 superoxide + 2 H(+) = H2O2 + O2. Destroys superoxide anion radicals which are normally produced within the cells and which are toxic to biological systems. In Mycobacteroides chelonae (Mycobacterium chelonae), this protein is Superoxide dismutase [Mn] (sodA).